Here is a 732-residue protein sequence, read N- to C-terminus: Kell blood group glycoprotein (732 aa).

The interval 1 to 37 (MEGGDQSEEEPRERSQAGGMGTLWSQESTPEERLPVE) is disordered. Over 1-47 (MEGGDQSEEEPRERSQAGGMGTLWSQESTPEERLPVEGSRPWAVARR) the chain is Cytoplasmic. Serine 7 carries the phosphoserine modification. A helical; Signal-anchor for type II membrane protein transmembrane segment spans residues 48–67 (VLTAILILGLLLCFSVLLFY). Residues 68–732 (NFQNCGPRPC…LNPSSRCQLW (665 aa)) lie on the Extracellular side of the membrane. The 657-residue stretch at 76–732 (PCETSVCLDL…LNPSSRCQLW (657 aa)) folds into the Peptidase M13 domain. Cysteine 77 and cysteine 82 are disulfide-bonded. N-linked (GlcNAc...) asparagine glycosylation is found at asparagine 94 and asparagine 115. Intrachain disulfides connect cysteine 100-cysteine 717, cysteine 108-cysteine 682, cysteine 155-cysteine 410, and cysteine 610-cysteine 729. The N-linked (GlcNAc...) asparagine; in KEL2 antigen glycan is linked to asparagine 191. The N-linked (GlcNAc...) asparagine glycan is linked to asparagine 345. Residue histidine 581 participates in Zn(2+) binding. Residue glutamate 582 is part of the active site. Residue histidine 585 coordinates Zn(2+). The N-linked (GlcNAc...) asparagine glycan is linked to asparagine 627. Glutamate 634 is a binding site for Zn(2+). Aspartate 638 (proton donor) is an active-site residue. The segment at 684–703 (KPSPQDSHDTHSPPHLRVHG) is disordered.

Belongs to the peptidase M13 family. Heterodimer with XK; disulfide-linked. Zn(2+) serves as cofactor. In terms of processing, N-glycosylated. In terms of tissue distribution, expressed at high levels in erythrocytes and testis (in Sertoli cells), and, at lower levels, in skeletal muscle, tonsils (in follicular dendritic cells), lymph node, spleen and appendix (at protein level). Also expressed in many adult and fetal nonerythroid tissues, including brain, spleen, lymph nodes and bone marrow.

It localises to the cell membrane. Its function is as follows. Zinc endopeptidase with endothelin-3-converting enzyme activity. Cleaves EDN1, EDN2 and EDN3, with a marked preference for EDN3. This is Kell blood group glycoprotein (KEL) from Homo sapiens (Human).